Here is a 387-residue protein sequence, read N- to C-terminus: S-adenosylmethionine synthase (387 aa).

His-17 lines the ATP pocket. Asp-19 contributes to the Mg(2+) binding site. K(+) is bound at residue Glu-45. The L-methionine site is built by Glu-58 and Gln-101. Residues 101 to 111 (QSPDIAQGVDR) are flexible loop. ATP contacts are provided by residues 168-170 (DAK), 234-235 (RF), Asp-243, 249-250 (RK), Ala-266, and Lys-270. Asp-243 serves as a coordination point for L-methionine. Position 274 (Lys-274) interacts with L-methionine.

The protein belongs to the AdoMet synthase family. Homotetramer; dimer of dimers. The cofactor is Mg(2+). It depends on K(+) as a cofactor.

It localises to the cytoplasm. The enzyme catalyses L-methionine + ATP + H2O = S-adenosyl-L-methionine + phosphate + diphosphate. It functions in the pathway amino-acid biosynthesis; S-adenosyl-L-methionine biosynthesis; S-adenosyl-L-methionine from L-methionine: step 1/1. Functionally, catalyzes the formation of S-adenosylmethionine (AdoMet) from methionine and ATP. The overall synthetic reaction is composed of two sequential steps, AdoMet formation and the subsequent tripolyphosphate hydrolysis which occurs prior to release of AdoMet from the enzyme. This is S-adenosylmethionine synthase from Bordetella petrii (strain ATCC BAA-461 / DSM 12804 / CCUG 43448).